The chain runs to 403 residues: S-adenosylmethionine synthase (403 aa).

ATP is bound at residue His15. Asp17 provides a ligand contact to Mg(2+). Glu43 is a binding site for K(+). 2 residues coordinate L-methionine: Glu56 and Gln99. The tract at residues 99–109 (QSPDINQGVDR) is flexible loop. Residues 166–168 (DAK), 232–233 (KF), Asp241, 247–248 (RK), Ala264, and Lys268 contribute to the ATP site. An L-methionine-binding site is contributed by Asp241. Lys272 provides a ligand contact to L-methionine.

It belongs to the AdoMet synthase family. In terms of assembly, homotetramer; dimer of dimers. It depends on Mg(2+) as a cofactor. K(+) serves as cofactor.

Its subcellular location is the cytoplasm. It carries out the reaction L-methionine + ATP + H2O = S-adenosyl-L-methionine + phosphate + diphosphate. It functions in the pathway amino-acid biosynthesis; S-adenosyl-L-methionine biosynthesis; S-adenosyl-L-methionine from L-methionine: step 1/1. In terms of biological role, catalyzes the formation of S-adenosylmethionine (AdoMet) from methionine and ATP. The overall synthetic reaction is composed of two sequential steps, AdoMet formation and the subsequent tripolyphosphate hydrolysis which occurs prior to release of AdoMet from the enzyme. The protein is S-adenosylmethionine synthase of Xanthomonas campestris pv. campestris (strain ATCC 33913 / DSM 3586 / NCPPB 528 / LMG 568 / P 25).